A 101-amino-acid chain; its full sequence is Signal recognition particle 19 kDa protein (101 aa).

Belongs to the SRP19 family. As to quaternary structure, part of the signal recognition particle protein translocation system, which is composed of SRP and FtsY. Archaeal SRP consists of a 7S RNA molecule of 300 nucleotides and two protein subunits: SRP54 and SRP19.

Its subcellular location is the cytoplasm. Involved in targeting and insertion of nascent membrane proteins into the cytoplasmic membrane. Binds directly to 7S RNA and mediates binding of the 54 kDa subunit of the SRP. The polypeptide is Signal recognition particle 19 kDa protein (Methanosarcina acetivorans (strain ATCC 35395 / DSM 2834 / JCM 12185 / C2A)).